The following is a 328-amino-acid chain: Beta-ketoacyl-[acyl-carrier-protein] synthase III (328 aa).

Catalysis depends on residues cysteine 122 and histidine 255. Residues 256–260 (QANIR) are ACP-binding. The active site involves asparagine 285.

It belongs to the thiolase-like superfamily. FabH family. Homodimer.

The protein resides in the cytoplasm. The enzyme catalyses malonyl-[ACP] + acetyl-CoA + H(+) = 3-oxobutanoyl-[ACP] + CO2 + CoA. The protein operates within lipid metabolism; fatty acid biosynthesis. Functionally, catalyzes the condensation reaction of fatty acid synthesis by the addition to an acyl acceptor of two carbons from malonyl-ACP. Catalyzes the first condensation reaction which initiates fatty acid synthesis and may therefore play a role in governing the total rate of fatty acid production. Possesses both acetoacetyl-ACP synthase and acetyl transacylase activities. Its substrate specificity determines the biosynthesis of branched-chain and/or straight-chain of fatty acids. In Janthinobacterium sp. (strain Marseille) (Minibacterium massiliensis), this protein is Beta-ketoacyl-[acyl-carrier-protein] synthase III.